The sequence spans 314 residues: Splicing factor YJU2 (314 aa).

Cys-43, Cys-46, Cys-80, and Cys-83 together coordinate Zn(2+). Disordered stretches follow at residues Met-178–Pro-238 and Leu-253–Ser-314. The span at Glu-200–Glu-209 shows a compositional bias: basic and acidic residues. Ser-211, Ser-213, and Ser-220 each carry phosphoserine. Residues Pro-222–Ala-232 show a composition bias toward low complexity. Over residues Pro-290–Gln-302 the composition is skewed to polar residues. Phosphoserine occurs at positions 309, 312, and 314.

This sequence belongs to the CWC16 family. YJU2 subfamily. Component of the spliceosome. Present in the activated B complex, the catalytically activated B* complex which catalyzes the branching, the catalytic step 1 C complex catalyzing the exon ligation, and the postcatalytic P complex containing the ligated exons (mRNA) and the excised lariat intron.

Its subcellular location is the nucleus. In terms of biological role, part of the spliceosome which catalyzes two sequential transesterification reactions, first the excision of the non-coding intron from pre-mRNA and then the ligation of the coding exons to form the mature mRNA. Plays a role in stabilizing the structure of the spliceosome catalytic core and docking of the branch helix into the active site, producing 5'-exon and lariat intron-3'-intermediates. May protect cells from TP53-dependent apoptosis upon dsDNA break damage through association with PRP19-CD5L complex. This Mus musculus (Mouse) protein is Splicing factor YJU2.